A 246-amino-acid polypeptide reads, in one-letter code: E3 ubiquitin-protein ligase LubX (246 aa).

U-box domains follow at residues 36 to 109 (TTPT…QTNY) and 131 to 204 (EIPD…RKRE).

In terms of assembly, interacts with host CLK1. Ubiquitinated in the presence of host E1 ubiquitin-activating enzyme, E2 ubiquitin-conjugating enzyme (UBE2D1 or UBE2D3) and ubiquitin.

The protein resides in the secreted. It is found in the host cell. It catalyses the reaction S-ubiquitinyl-[E2 ubiquitin-conjugating enzyme]-L-cysteine + [acceptor protein]-L-lysine = [E2 ubiquitin-conjugating enzyme]-L-cysteine + N(6)-ubiquitinyl-[acceptor protein]-L-lysine.. Functionally, effector proteins function to alter host cell physiology and promote bacterial survival in host tissues. This protein is an E3 ubiquitin ligase that interferes with host's ubiquitination pathway. Acts in conjunction with host E2 ubiquitin-conjugating enzymes UBE2D1 (UBCH5A) or UBE2D3 (UBCH5C), and mediates polyubiquitination of host kinase CLK1. The chain is E3 ubiquitin-protein ligase LubX (lubX) from Legionella pneumophila subsp. pneumophila (strain Philadelphia 1 / ATCC 33152 / DSM 7513).